The sequence spans 1390 residues: DNA-directed RNA polymerase subunit beta'' (1390 aa).

Positions 224, 294, 301, and 304 each coordinate Zn(2+).

Belongs to the RNA polymerase beta' chain family. RpoC2 subfamily. In plastids the minimal PEP RNA polymerase catalytic core is composed of four subunits: alpha, beta, beta', and beta''. When a (nuclear-encoded) sigma factor is associated with the core the holoenzyme is formed, which can initiate transcription. The cofactor is Zn(2+).

The protein localises to the plastid. The protein resides in the chloroplast. The catalysed reaction is RNA(n) + a ribonucleoside 5'-triphosphate = RNA(n+1) + diphosphate. DNA-dependent RNA polymerase catalyzes the transcription of DNA into RNA using the four ribonucleoside triphosphates as substrates. This Ceratophyllum demersum (Rigid hornwort) protein is DNA-directed RNA polymerase subunit beta''.